We begin with the raw amino-acid sequence, 265 residues long: Mlc titration factor A (265 aa).

4 residues coordinate Zn(2+): histidine 111, histidine 148, histidine 152, and glutamate 211.

It belongs to the MtfA family. As to quaternary structure, interacts with Mlc. It depends on Zn(2+) as a cofactor.

It localises to the cytoplasm. Functionally, involved in the modulation of the activity of the glucose-phosphotransferase system (glucose-PTS). Interacts with the transcriptional repressor Mlc, preventing its interaction with DNA and leading to the modulation of expression of genes regulated by Mlc, including ptsG, which encodes the PTS system glucose-specific EIICB component. In terms of biological role, shows zinc-dependent metallopeptidase activity. This Salmonella typhi protein is Mlc titration factor A.